Consider the following 567-residue polypeptide: Berberine bridge enzyme-like D-1 (567 aa).

The signal sequence occupies residues 1-33 (MKRNISMFLQLLLIILMMISFLFTSLLVPSVSA). Cysteine 42 and cysteine 103 are joined by a disulfide. Asparagine 50 is a glycosylation site (N-linked (GlcNAc...) asparagine). An FAD-binding PCMH-type domain is found at 81–257 (SKPKPTVIIV…YAWKIRLLKV (177 aa)). The residue at position 118 (histidine 118) is a Pros-8alpha-FAD histidine. Asparagine 364 and asparagine 378 each carry an N-linked (GlcNAc...) asparagine glycan.

Belongs to the oxygen-dependent FAD-linked oxidoreductase family. The cofactor is FAD. As to expression, mostly expressed in roots at low levels.

The protein localises to the vacuole. Its pathway is alkaloid biosynthesis; nicotine biosynthesis. Involved in the biosynthesis of pyridine alkaloid natural products, leading mainly to the production of anabasine, anatabine, nicotine and nornicotine, effective deterrents against herbivores with antiparasitic and pesticide properties (neurotoxins); nornicotine serves as the precursor in the synthesis of the carcinogen compound N'-nitrosonornicotine (NNN). Catalyzes a late oxidation step subsequent to the pyridine ring condensation reaction in the biosynthesis of alkaloids. This Nicotiana tabacum (Common tobacco) protein is Berberine bridge enzyme-like D-1.